The following is a 158-amino-acid chain: Putative pre-16S rRNA nuclease (158 aa).

Belongs to the YqgF nuclease family.

The protein localises to the cytoplasm. In terms of biological role, could be a nuclease involved in processing of the 5'-end of pre-16S rRNA. The chain is Putative pre-16S rRNA nuclease from Acidiphilium cryptum (strain JF-5).